The primary structure comprises 110 residues: Phosphoribosyl-ATP pyrophosphatase (110 aa).

This sequence belongs to the PRA-PH family.

Its subcellular location is the cytoplasm. The enzyme catalyses 1-(5-phospho-beta-D-ribosyl)-ATP + H2O = 1-(5-phospho-beta-D-ribosyl)-5'-AMP + diphosphate + H(+). Its pathway is amino-acid biosynthesis; L-histidine biosynthesis; L-histidine from 5-phospho-alpha-D-ribose 1-diphosphate: step 2/9. The chain is Phosphoribosyl-ATP pyrophosphatase (hisE) from Clostridium acetobutylicum (strain ATCC 824 / DSM 792 / JCM 1419 / IAM 19013 / LMG 5710 / NBRC 13948 / NRRL B-527 / VKM B-1787 / 2291 / W).